Reading from the N-terminus, the 465-residue chain is MSGFWESCLQRFEQELPAQQFNTWIKPLRLEGESTALEDGLRLIAPNGFILKWVRDRYLTRIEDYSRTFFEGPVTIALVIGSGKATAARIQATTTDSGQNAPANPATTSEKRTAASEKARGKGSNYEKSRLFPSFTFDNLVVGKANDLARAAAVQVANNPGGAYNPLFIYGGAGLGKTHLIHAIGNTIATENPEKIVRYVHAEDYYSDVVRAYQQKSFDSFKRTYRSLDVLLLDDVQFFNGKNRSQEEFFFLFNALIEARKQIIITCDTYPKDINGLDDRLVTRFDWGLTVQIEPPELEMRVAILKKKAEAEGIQLDDEVAFFIAKHLRSNVRELEGALKKVLAYSSFHGRVIALDLAKEALKDVIGSVRNVGMDNIQKTVADYYKIKVAELFSKKRTRAIARPRQVAMWLCREVTSHSFPEIGDAFGGRDHTTVIHAVKTIDSLRIKENELNHDLHVLLQVLKG.

The segment at 1–85 is domain I, interacts with DnaA modulators; the sequence is MSGFWESCLQ…IALVIGSGKA (85 aa). A domain II region spans residues 85-129; that stretch reads ATAARIQATTTDSGQNAPANPATTSEKRTAASEKARGKGSNYEKS. Residues 93–108 show a composition bias toward polar residues; that stretch reads TTTDSGQNAPANPATT. The segment at 93–125 is disordered; the sequence is TTTDSGQNAPANPATTSEKRTAASEKARGKGSN. Residues 109-125 show a composition bias toward basic and acidic residues; the sequence is SEKRTAASEKARGKGSN. Positions 130-346 are domain III, AAA+ region; sequence RLFPSFTFDN…GALKKVLAYS (217 aa). The ATP site is built by glycine 174, glycine 176, lysine 177, and threonine 178. Positions 347-465 are domain IV, binds dsDNA; it reads SFHGRVIALD…LHVLLQVLKG (119 aa).

It belongs to the DnaA family. Oligomerizes as a right-handed, spiral filament on DNA at oriC.

Its subcellular location is the cytoplasm. Plays an essential role in the initiation and regulation of chromosomal replication. ATP-DnaA binds to the origin of replication (oriC) to initiate formation of the DNA replication initiation complex once per cell cycle. Binds the DnaA box (a 9 base pair repeat at the origin) and separates the double-stranded (ds)DNA. Forms a right-handed helical filament on oriC DNA; dsDNA binds to the exterior of the filament while single-stranded (ss)DNA is stabiized in the filament's interior. The ATP-DnaA-oriC complex binds and stabilizes one strand of the AT-rich DNA unwinding element (DUE), permitting loading of DNA polymerase. After initiation quickly degrades to an ADP-DnaA complex that is not apt for DNA replication. Binds acidic phospholipids. The protein is Chromosomal replication initiator protein DnaA of Dechloromonas aromatica (strain RCB).